We begin with the raw amino-acid sequence, 503 residues long: Aminoaldehyde dehydrogenase 1, peroxisomal (503 aa).

The Na(+) site is built by Ile28, Asp99, and Leu189. Residue 238 to 245 (GSTMTGSK) coordinates NAD(+). The active-site Proton acceptor is Glu260. Cys294 and Glu393 together coordinate NAD(+). Cys294 (nucleophile) is an active-site residue.

The protein belongs to the aldehyde dehydrogenase family. Expressed in leaves, flowers and fruits.

It localises to the cytoplasm. The protein resides in the cytosol. The catalysed reaction is 4-aminobutanal + NAD(+) + H2O = 4-aminobutanoate + NADH + 2 H(+). The enzyme catalyses 3-aminopropanal + NAD(+) + H2O = beta-alanine + NADH + 2 H(+). Its pathway is amine and polyamine biosynthesis; betaine biosynthesis via choline pathway; betaine from betaine aldehyde: step 1/1. Functionally, dehydrogenase that catalyzes the oxidation of several aminoaldehydes. Metabolizes and detoxifies aldehyde products of polyamine degradation to non-toxic amino acids. Catalyzes the oxidation of 4-aminobutanal and 3-aminopropanal to 4-aminobutanoate and beta-alanine, respectively. The protein is Aminoaldehyde dehydrogenase 1, peroxisomal of Malus domestica (Apple).